The sequence spans 305 residues: Protoheme IX farnesyltransferase (305 aa).

A run of 9 helical transmembrane segments spans residues 31 to 51, 53 to 73, 98 to 118, 124 to 144, 153 to 173, 181 to 201, 221 to 241, 242 to 262, and 285 to 305; these read IQVL…KGHV, PLLL…ANAF, ILPW…FAVL, LFAA…YTLW, IVIG…AVTG, VLFG…AMMI, ATAR…LVLY, PLGT…LWLI, and SIFY…FLFA.

This sequence belongs to the UbiA prenyltransferase family. Protoheme IX farnesyltransferase subfamily.

Its subcellular location is the cell inner membrane. It catalyses the reaction heme b + (2E,6E)-farnesyl diphosphate + H2O = Fe(II)-heme o + diphosphate. Its pathway is porphyrin-containing compound metabolism; heme O biosynthesis; heme O from protoheme: step 1/1. In terms of biological role, converts heme B (protoheme IX) to heme O by substitution of the vinyl group on carbon 2 of heme B porphyrin ring with a hydroxyethyl farnesyl side group. The protein is Protoheme IX farnesyltransferase of Gloeobacter violaceus (strain ATCC 29082 / PCC 7421).